A 234-amino-acid polypeptide reads, in one-letter code: Sugar fermentation stimulation protein homolog (234 aa).

It belongs to the SfsA family.

This is Sugar fermentation stimulation protein homolog from Shewanella halifaxensis (strain HAW-EB4).